The sequence spans 48 residues: 4-carboxymuconolactone decarboxylase (48 aa).

The protein belongs to the carboxymuconolactone decarboxylase family.

The enzyme catalyses (R)-2-(carboxymethyl)-5-oxo-2,5-dihydro-2-furoate + H(+) = (4,5-dihydro-5-oxofuran-2-yl)-acetate + CO2. Its pathway is aromatic compound metabolism; beta-ketoadipate pathway; 5-oxo-4,5-dihydro-2-furylacetate from 3-carboxy-cis,cis-muconate: step 2/2. The chain is 4-carboxymuconolactone decarboxylase from Pseudomonas putida (Arthrobacter siderocapsulatus).